Reading from the N-terminus, the 485-residue chain is Argininosuccinate lyase (485 aa).

Belongs to the lyase 1 family. Argininosuccinate lyase subfamily.

The protein resides in the cytoplasm. The catalysed reaction is 2-(N(omega)-L-arginino)succinate = fumarate + L-arginine. The protein operates within amino-acid biosynthesis; L-arginine biosynthesis; L-arginine from L-ornithine and carbamoyl phosphate: step 3/3. The chain is Argininosuccinate lyase from Nitrosopumilus maritimus (strain SCM1).